The following is a 179-amino-acid chain: MSRIGKKPIAVPKGVTFNVQGDVVTVKGPKGTVSNHLPGGVKLALEDGNIVVTRDDESKRAIHGLVRALVNNAVEGVTKGWTRNLEIVGIGYRAELKGKGTVVFTLGYSHPIEYPLPTGIEAAVDAKQTALTITGIDRQKVGQVAAEMRALRPPDPYKNKGVRYAGEKLKKKVGKTGAK.

This sequence belongs to the universal ribosomal protein uL6 family. Part of the 50S ribosomal subunit.

Its function is as follows. This protein binds to the 23S rRNA, and is important in its secondary structure. It is located near the subunit interface in the base of the L7/L12 stalk, and near the tRNA binding site of the peptidyltransferase center. The chain is Large ribosomal subunit protein uL6 from Koribacter versatilis (strain Ellin345).